Reading from the N-terminus, the 288-residue chain is Polyamine aminopropyltransferase (288 aa).

Residues 9-242 form the PABS domain; the sequence is SGWLDEYHQG…GLWSWAFASM (234 aa). Gln-36 serves as a coordination point for S-methyl-5'-thioadenosine. Spermidine-binding residues include His-67 and Asp-91. Residues Glu-111 and 143 to 144 contribute to the S-methyl-5'-thioadenosine site; that span reads NG. Asp-162 (proton acceptor) is an active-site residue. Pro-169 is a binding site for S-methyl-5'-thioadenosine.

It belongs to the spermidine/spermine synthase family. Homodimer or homotetramer.

It localises to the cytoplasm. The catalysed reaction is S-adenosyl 3-(methylsulfanyl)propylamine + putrescine = S-methyl-5'-thioadenosine + spermidine + H(+). Its pathway is amine and polyamine biosynthesis; spermidine biosynthesis; spermidine from putrescine: step 1/1. Functionally, catalyzes the irreversible transfer of a propylamine group from the amino donor S-adenosylmethioninamine (decarboxy-AdoMet) to putrescine (1,4-diaminobutane) to yield spermidine. The sequence is that of Polyamine aminopropyltransferase from Prochlorococcus marinus (strain NATL1A).